A 148-amino-acid chain; its full sequence is NADPH-dependent 7-cyano-7-deazaguanine reductase (148 aa).

The active-site Thioimide intermediate is cysteine 50. The Proton donor role is filled by aspartate 57. Residues 72-74 (VES) and 91-92 (HE) contribute to the substrate site.

It belongs to the GTP cyclohydrolase I family. QueF type 1 subfamily.

It localises to the cytoplasm. The catalysed reaction is 7-aminomethyl-7-carbaguanine + 2 NADP(+) = 7-cyano-7-deazaguanine + 2 NADPH + 3 H(+). Its pathway is tRNA modification; tRNA-queuosine biosynthesis. Its function is as follows. Catalyzes the NADPH-dependent reduction of 7-cyano-7-deazaguanine (preQ0) to 7-aminomethyl-7-deazaguanine (preQ1). The protein is NADPH-dependent 7-cyano-7-deazaguanine reductase of Helicobacter pylori (strain ATCC 700392 / 26695) (Campylobacter pylori).